The following is a 209-amino-acid chain: RNA chaperone ProQ (209 aa).

Residues 101–155 (LAESKAKVQARRKEQAQKAREEGKAKAKPAANKKPQQPRRTNKPKVQKPTKPVET) are disordered. Basic and acidic residues predominate over residues 111–125 (RRKEQAQKAREEGKA). A compositionally biased stretch (basic residues) spans 136–148 (QQPRRTNKPKVQK).

The protein belongs to the ProQ family.

It is found in the cytoplasm. RNA chaperone with significant RNA binding, RNA strand exchange and RNA duplexing activities. The chain is RNA chaperone ProQ from Vibrio parahaemolyticus serotype O3:K6 (strain RIMD 2210633).